The sequence spans 496 residues: Catalase isozyme 3 (496 aa).

The segment at 1–25 (MTMDPTKFRPSSSHDTTVTTTNAGA) is disordered. Positions 9–23 (RPSSSHDTTVTTTNA) are enriched in polar residues. Active-site residues include H67 and N140. Y351 contacts heme. Positions 402–422 (PLRQAAPPTPLPPRPVAGRRE) are disordered.

Belongs to the catalase family. In terms of assembly, homotetramer. Heme serves as cofactor. As to expression, leaf mesophyll cells, pericarp, seedling roots and the coleoptile.

It is found in the mitochondrion. The enzyme catalyses 2 H2O2 = O2 + 2 H2O. In terms of biological role, occurs in almost all aerobically respiring organisms and serves to protect cells from the toxic effects of hydrogen peroxide. Its levels are highest in the light period and are lowest in the dark period, hence it may be important for scavenging hydrogen peroxide at night, rather than during the day. This Zea mays (Maize) protein is Catalase isozyme 3 (CAT3).